The chain runs to 353 residues: Adenine deaminase (353 aa).

3 residues coordinate Zn(2+): His-19, His-21, and His-208. Glu-211 acts as the Proton donor in catalysis. Residue Asp-289 participates in Zn(2+) binding. Position 290 (Asp-290) interacts with substrate.

It belongs to the metallo-dependent hydrolases superfamily. Adenosine and AMP deaminases family. Adenine deaminase type 2 subfamily. Zn(2+) is required as a cofactor.

The protein localises to the cytoplasm. It localises to the nucleus. The catalysed reaction is adenine + H2O + H(+) = hypoxanthine + NH4(+). Its function is as follows. Catalyzes the hydrolytic deamination of adenine to hypoxanthine. Plays an important role in the purine salvage pathway and in nitrogen catabolism. The sequence is that of Adenine deaminase from Gibberella zeae (strain ATCC MYA-4620 / CBS 123657 / FGSC 9075 / NRRL 31084 / PH-1) (Wheat head blight fungus).